The primary structure comprises 257 residues: 5-oxoprolinase subunit A (257 aa).

It belongs to the LamB/PxpA family. Forms a complex composed of PxpA, PxpB and PxpC.

The enzyme catalyses 5-oxo-L-proline + ATP + 2 H2O = L-glutamate + ADP + phosphate + H(+). Catalyzes the cleavage of 5-oxoproline to form L-glutamate coupled to the hydrolysis of ATP to ADP and inorganic phosphate. This chain is 5-oxoprolinase subunit A, found in Halalkalibacterium halodurans (strain ATCC BAA-125 / DSM 18197 / FERM 7344 / JCM 9153 / C-125) (Bacillus halodurans).